Here is a 1358-residue protein sequence, read N- to C-terminus: DNA-directed RNA polymerase subunit beta (1358 aa).

The protein belongs to the RNA polymerase beta chain family. The RNAP catalytic core consists of 2 alpha, 1 beta, 1 beta' and 1 omega subunit. When a sigma factor is associated with the core the holoenzyme is formed, which can initiate transcription.

The enzyme catalyses RNA(n) + a ribonucleoside 5'-triphosphate = RNA(n+1) + diphosphate. DNA-dependent RNA polymerase catalyzes the transcription of DNA into RNA using the four ribonucleoside triphosphates as substrates. The sequence is that of DNA-directed RNA polymerase subunit beta from Methylococcus capsulatus (strain ATCC 33009 / NCIMB 11132 / Bath).